The following is a 309-amino-acid chain: Olfactory receptor 8U9 (309 aa).

At 1–28 the chain is on the extracellular side; sequence MTQINCTQVTEFILVGLTDRQELKMPLF. A glycan (N-linked (GlcNAc...) asparagine) is linked at Asn5. The chain crosses the membrane as a helical span at residues 29-49; that stretch reads VLFLSIYLFTVVGNLGLILLI. The Cytoplasmic segment spans residues 50-56; that stretch reads RTDEKLN. The helical transmembrane segment at 57–77 threads the bilayer; the sequence is TPMYFFLSNLAFVDFCYSSVI. The Extracellular portion of the chain corresponds to 78–97; it reads TPKMLGNFLYKQNSISFNAC. Cys97 and Cys179 are joined by a disulfide. The chain crosses the membrane as a helical span at residues 98 to 118; sequence AAQLGCFLAFMTAECLLLASM. Topologically, residues 119–143 are cytoplasmic; the sequence is AYDRYVAICNPLMYMVVMSPGICIQ. A helical membrane pass occupies residues 144 to 164; the sequence is LVAAPHSYSILVALFHTILTF. The Extracellular segment spans residues 165–204; sequence RLSYCHSNIVNHFYCDDMPLLRLTCSDTRFKQLWIFACAG. A helical transmembrane segment spans residues 205–225; sequence IMFISSLLIVFVSYMFIISAI. Topologically, residues 226–239 are cytoplasmic; the sequence is LRMHSAEGRQKAFS. A helical membrane pass occupies residues 240-260; sequence TCGSHMLAVTIFYGTLIFMYL. Residues 261 to 272 are Extracellular-facing; the sequence is QPSSSHALDTDK. Residues 273 to 293 traverse the membrane as a helical segment; sequence MASVFYTVIIPMLNPLIYSLQ. Over 294–309 the chain is Cytoplasmic; it reads NKEVKEALKKIIINKN.

This sequence belongs to the G-protein coupled receptor 1 family.

It localises to the cell membrane. Odorant receptor. This chain is Olfactory receptor 8U9 (OR8U9), found in Homo sapiens (Human).